A 140-amino-acid polypeptide reads, in one-letter code: Baculoviral IAP repeat-containing protein 5 (140 aa).

The stretch at 18 to 88 (RIATFKNWPF…KHSPGCAFLT (71 aa)) is one BIR repeat. An N6-acetyllysine modification is found at K23. T34 is subject to Phosphothreonine; by CDK1 and CDK15. Position 48 is a phosphothreonine (T48). Zn(2+)-binding residues include C57, C60, E76, H77, H80, and C84. N6-acetyllysine is present on residues K90, K110, K112, and K115. Basic and acidic residues predominate over residues 113-129 (IAKETNNKQKEFEETAK). Residues 113-140 (IAKETNNKQKEFEETAKTTRQSIEQLAA) form a disordered region. At T117 the chain carries Phosphothreonine; by AURKB. At K129 the chain carries N6-acetyllysine. Positions 130–140 (TTRQSIEQLAA) are enriched in polar residues.

Belongs to the IAP family. As to quaternary structure, monomer or homodimer. Exists as a homodimer in the apo state and as a monomer in the CPC-bound state. The monomer protects cells against apoptosis more efficiently than the dimer. Only the dimeric form is capable of enhancing tubulin stability in cells. When phosphorylated, interacts with LAMTOR5/HBXIP; the resulting complex binds pro-CASP9, as well as active CASP9, but much less efficiently. Component of the chromosomal passenger complex (CPC) composed of at least BIRC5/survivin, CDCA8/borealin, INCENP, AURKB or AURKC; in the complex forms a triple-helix bundle-based subcomplex with INCENP and CDCA8. Interacts with JTB. Interacts (via BIR domain) with histone H3 phosphorylated at 'Thr-3' (H3pT3). Interacts with EVI5. Interacts with GTP-bound RAN in both the S and M phases of the cell cycle. Interacts with USP9X. Interacts with tubulin. Interacts with BIRC2/c-IAP1. The acetylated form at Lys-129 interacts with STAT3. The monomeric form deacetylated at Lys-129 interacts with XPO1/CRM1. The monomeric form interacts with XIAP/BIRC4. Both the dimeric and monomeric form can interact with DIABLO/SMAC. Interacts with BIRC6/bruce. Interacts with FBXL7; this interaction facilitates the polyubiquitination and subsequent proteasomal degradation of BIRC5 by the SCF(FBXL7) E3 ubiquitin-protein ligase complex. Post-translationally, ubiquitinated by the Cul9-RING ubiquitin-protein ligase complex, leading to its degradation. Ubiquitination is required for centrosomal targeting. Deubiquitinated by USP35 or USP38; leading to stabilization. In terms of processing, acetylation at Lys-129 results in its homodimerization, while deacetylation promotes the formation of monomers which heterodimerize with XPO1/CRM1 which facilitates its nuclear export. The acetylated form represses STAT3 transactivation. The dynamic equilibrium between its acetylation and deacetylation at Lys-129 determines its interaction with XPO1/CRM1, its subsequent subcellular localization, and its ability to inhibit STAT3 transactivation. In vitro phosphorylation at Thr-117 by AURKB prevents interaction with INCENP and localization to mitotic chromosomes. Phosphorylation at Thr-48 by CK2 is critical for its mitotic and anti-apoptotic activities. Phosphorylation at Thr-34 by CDK15 is critical for its anti-apoptotic activity.

The protein localises to the cytoplasm. The protein resides in the nucleus. It is found in the chromosome. Its subcellular location is the centromere. It localises to the cytoskeleton. The protein localises to the spindle. The protein resides in the kinetochore. It is found in the midbody. Functionally, multitasking protein that has dual roles in promoting cell proliferation and preventing apoptosis. Component of a chromosome passage protein complex (CPC) which is essential for chromosome alignment and segregation during mitosis and cytokinesis. Acts as an important regulator of the localization of this complex; directs CPC movement to different locations from the inner centromere during prometaphase to midbody during cytokinesis and participates in the organization of the center spindle by associating with polymerized microtubules. Involved in the recruitment of CPC to centromeres during early mitosis via association with histone H3 phosphorylated at 'Thr-3' (H3pT3) during mitosis. The complex with RAN plays a role in mitotic spindle formation by serving as a physical scaffold to help deliver the RAN effector molecule TPX2 to microtubules. May counteract a default induction of apoptosis in G2/M phase. The acetylated form represses STAT3 transactivation of target gene promoters. May play a role in neoplasia. Inhibitor of CASP3 and CASP7. Essential for the maintenance of mitochondrial integrity and function. The protein is Baculoviral IAP repeat-containing protein 5 (Birc5) of Mus musculus (Mouse).